Reading from the N-terminus, the 206-residue chain is Large ribosomal subunit protein mL40 (206 aa).

A mitochondrion-targeting transit peptide spans 1 to 46 (MTASVLRSISLALRPTSGLLGTWQTQLRETHQRASLLSFWELIPMR). A disordered region spans residues 168–192 (LFPFEKEGPHYTPPIPNYQPPEGRY).

This sequence belongs to the mitochondrion-specific ribosomal protein mL40 family. Component of the mitochondrial large ribosomal subunit (mt-LSU). Mature mammalian 55S mitochondrial ribosomes consist of a small (28S) and a large (39S) subunit. The 28S small subunit contains a 12S ribosomal RNA (12S mt-rRNA) and 30 different proteins. The 39S large subunit contains a 16S rRNA (16S mt-rRNA), a copy of mitochondrial valine transfer RNA (mt-tRNA(Val)), which plays an integral structural role, and 52 different proteins. mL40 binds to the major groove of the anticodon stem of mt-tRNA(Val) in the central protuberance. In terms of tissue distribution, ubiquitous.

The protein resides in the mitochondrion. This chain is Large ribosomal subunit protein mL40 (MRPL40), found in Homo sapiens (Human).